The chain runs to 486 residues: Cardiolipin synthase A (486 aa).

The next 2 helical transmembrane spans lie at 3 to 23 and 38 to 58; these read TFYT…IAGV and MAWL…YLSL. PLD phosphodiesterase domains lie at 219-246 and 399-426; these read MDLR…VDPR and EGGL…DMRS. Residues H224, K226, D231, H404, K406, and D411 contribute to the active site.

It belongs to the phospholipase D family. Cardiolipin synthase subfamily. ClsA sub-subfamily.

The protein resides in the cell inner membrane. It carries out the reaction 2 a 1,2-diacyl-sn-glycero-3-phospho-(1'-sn-glycerol) = a cardiolipin + glycerol. Functionally, catalyzes the reversible phosphatidyl group transfer from one phosphatidylglycerol molecule to another to form cardiolipin (CL) (diphosphatidylglycerol) and glycerol. This is Cardiolipin synthase A from Erwinia tasmaniensis (strain DSM 17950 / CFBP 7177 / CIP 109463 / NCPPB 4357 / Et1/99).